A 119-amino-acid polypeptide reads, in one-letter code: Venom allergen 2 (119 aa).

Belongs to the ant venom allergen 2/4 family. As to quaternary structure, homodimer; disulfide-linked. As to expression, expressed by the venom gland.

It localises to the secreted. This chain is Venom allergen 2, found in Solenopsis richteri (Black imported fire ant).